The chain runs to 64 residues: Mitotic-spindle organizing protein 1 (64 aa).

Belongs to the MOZART1 family. In terms of assembly, part of the gamma-tubulin complex. Interacts directly with alp6/GPC3.

It is found in the cytoplasm. The protein localises to the cytoskeleton. Its subcellular location is the microtubule organizing center. It localises to the spindle pole body. In terms of biological role, required for gamma-tubulin complex recruitment to the microtubule organizing center (MTOC). This chain is Mitotic-spindle organizing protein 1 (mzt1), found in Schizosaccharomyces pombe (strain 972 / ATCC 24843) (Fission yeast).